The chain runs to 183 residues: Pectinesterase inhibitor 8 (183 aa).

The first 30 residues, 1–30 (MAQRASRRPAAAAAAVVVAVVLAVSGGVGA), serve as a signal peptide directing secretion. 2 cysteine pairs are disulfide-bonded: cysteine 36/cysteine 51 and cysteine 107/cysteine 147.

It belongs to the PMEI family.

It localises to the secreted. It is found in the extracellular space. The protein resides in the apoplast. In terms of biological role, pectin methylesterase (PME) inhibitor that inhibits PME in vitro. The chain is Pectinesterase inhibitor 8 from Oryza sativa subsp. japonica (Rice).